Consider the following 452-residue polypeptide: Phosphoglucosamine mutase (452 aa).

Ser-104 serves as the catalytic Phosphoserine intermediate. Residues Ser-104, Asp-246, Asp-248, and Asp-250 each coordinate Mg(2+). Position 104 is a phosphoserine (Ser-104).

The protein belongs to the phosphohexose mutase family. The cofactor is Mg(2+). Activated by phosphorylation.

The catalysed reaction is alpha-D-glucosamine 1-phosphate = D-glucosamine 6-phosphate. Its function is as follows. Catalyzes the conversion of glucosamine-6-phosphate to glucosamine-1-phosphate. In Streptomyces avermitilis (strain ATCC 31267 / DSM 46492 / JCM 5070 / NBRC 14893 / NCIMB 12804 / NRRL 8165 / MA-4680), this protein is Phosphoglucosamine mutase.